The following is a 402-amino-acid chain: Caspase-1 (402 aa).

The region spanning 1–91 (MADKILRAKR…YLAGILELQS (91 aa)) is the CARD domain. Positions 1–118 (MADKILRAKR…PSSSETKEEQ (118 aa)) are excised as a propeptide. The tract at residues 98-125 (FVATEDSKGGHPSSSETKEEQNKEDGTF) is disordered. Residues 113–123 (ETKEEQNKEDG) show a composition bias toward basic and acidic residues. Catalysis depends on residues His236 and Cys284. The propeptide occupies 297 to 314 (SVRDSEEDFLTDAIFEDD). Position 301 is a phosphoserine (Ser301). Arg343 is subject to Omega-N-methylarginine.

Belongs to the peptidase C14A family. In terms of assembly, heterotetramer that consists of two anti-parallel arranged heterodimers, each one formed by a 20 kDa (Caspase-1 subunit p20) and a 10 kDa (Caspase-1 subunit p10) subunit. May be a component of the inflammasome, a protein complex which also includes PYCARD, CARD8 and NLRP2 and whose function would be the activation of pro-inflammatory caspases. Component of the AIM2 PANoptosome complex, a multiprotein complex that drives inflammatory cell death (PANoptosis). Both the p10 and p20 subunits interact with MEFV. Interacts with CARD17P/INCA and CARD18. Interacts with SERPINB1; this interaction regulates CASP1 activity. As to quaternary structure, heterotetramer that consists of two anti-parallel arranged heterodimers, each one formed by a 20 kDa (Caspase-1 subunit p20) and a 10 kDa (Caspase-1 subunit p10) subunit. In terms of processing, the two subunits are derived from the precursor sequence by an autocatalytic mechanism. Post-translationally, ubiquitinated via 'Lys-11'-linked polyubiquitination. Deubiquitinated by USP8. In terms of tissue distribution, high level expression seen in spleen and lung, low level expression seen in brain, heart, liver, kidney, testis and skeletal muscle.

It is found in the cytoplasm. It localises to the cell membrane. It catalyses the reaction Strict requirement for an Asp residue at position P1 and has a preferred cleavage sequence of Tyr-Val-Ala-Asp-|-.. Its function is as follows. Thiol protease involved in a variety of inflammatory processes by proteolytically cleaving other proteins, such as the precursors of the inflammatory cytokines interleukin-1 beta (IL1B) and interleukin 18 (IL18) as well as the pyroptosis inducer Gasdermin-D (GSDMD), into active mature peptides. Plays a key role in cell immunity as an inflammatory response initiator: once activated through formation of an inflammasome complex, it initiates a pro-inflammatory response through the cleavage of the two inflammatory cytokines IL1B and IL18, releasing the mature cytokines which are involved in a variety of inflammatory processes. Cleaves a tetrapeptide after an Asp residue at position P1. Also initiates pyroptosis, a programmed lytic cell death pathway, through cleavage of GSDMD. In contrast to cleavage of interleukin IL1B, recognition and cleavage of GSDMD is not strictly dependent on the consensus cleavage site but depends on an exosite interface on CASP1 that recognizes and binds the Gasdermin-D, C-terminal (GSDMD-CT) part. Cleaves and activates CASP7 in response to bacterial infection, promoting plasma membrane repair. Upon inflammasome activation, during DNA virus infection but not RNA virus challenge, controls antiviral immunity through the cleavage of CGAS, rendering it inactive. In apoptotic cells, cleaves SPHK2 which is released from cells and remains enzymatically active extracellularly. The sequence is that of Caspase-1 (Casp1) from Mus musculus (Mouse).